The following is a 224-amino-acid chain: Response regulator protein GraR (224 aa).

A Response regulatory domain is found at 2-115 (QILLVEDDNT…VLIAKLQAIY (114 aa)). A 4-aspartylphosphate modification is found at Asp51. Residues 126–224 (KRTLTWQDAI…KVGKGYMAHE (99 aa)) constitute a DNA-binding region (ompR/PhoB-type). A phosphothreonine mark is found at Thr128, Thr130, and Thr149.

In terms of assembly, interacts with GraX. Post-translationally, phosphorylated by GraS. Phosphorylated by Stk1; phosphorylation increases the DNA-binding activity of GraR.

The protein resides in the cytoplasm. Functionally, member of the two-component regulatory system GraR/GraS involved in resistance against cationic antimicrobial peptides (CAMPs). Upon phosphorylation by GraS, functions as a transcription regulator by direct binding to promoter regions of target genes such as adhesins, exoproteins, transporters, toxins, and proteins involved in cell wall synthesis. Down-regulates the expression of many genes involved in RNA and amino acid synthesis or glycolysis. The chain is Response regulator protein GraR (graR) from Staphylococcus aureus (strain bovine RF122 / ET3-1).